Reading from the N-terminus, the 145-residue chain is 3-hydroxyacyl-[acyl-carrier-protein] dehydratase FabZ (145 aa).

Residue His-47 is part of the active site.

It belongs to the thioester dehydratase family. FabZ subfamily.

The protein resides in the cytoplasm. The catalysed reaction is a (3R)-hydroxyacyl-[ACP] = a (2E)-enoyl-[ACP] + H2O. Its function is as follows. Involved in unsaturated fatty acids biosynthesis. Catalyzes the dehydration of short chain beta-hydroxyacyl-ACPs and long chain saturated and unsaturated beta-hydroxyacyl-ACPs. This is 3-hydroxyacyl-[acyl-carrier-protein] dehydratase FabZ from Aromatoleum aromaticum (strain DSM 19018 / LMG 30748 / EbN1) (Azoarcus sp. (strain EbN1)).